Here is a 121-residue protein sequence, read N- to C-terminus: Large ribosomal subunit protein uL22 (121 aa).

Belongs to the universal ribosomal protein uL22 family. As to quaternary structure, part of the 50S ribosomal subunit.

In terms of biological role, this protein binds specifically to 23S rRNA; its binding is stimulated by other ribosomal proteins, e.g. L4, L17, and L20. It is important during the early stages of 50S assembly. It makes multiple contacts with different domains of the 23S rRNA in the assembled 50S subunit and ribosome. Functionally, the globular domain of the protein is located near the polypeptide exit tunnel on the outside of the subunit, while an extended beta-hairpin is found that lines the wall of the exit tunnel in the center of the 70S ribosome. The chain is Large ribosomal subunit protein uL22 from Arthrobacter sp. (strain FB24).